Reading from the N-terminus, the 266-residue chain is MKLSLSPPPYADAPVVVLISGLGGSGSYWLPQLAVLDQEYQVVCYDQRGTGNNPDTLAEDYSIAQMAAELHQALVAAGIERYAVIGHALGALVGMQLALDYPASVTVLVSVNGWLRINAHTRRCFQVREQLLHSGGAQAWVEAQPLFLYPADWMAARAPRLEAEDALALAHFQGKNNLLRRLNALKRADFSRHADRIRCPVQIICASDDLLVPSACSSELHAALPDSQKMVMRYGGHACNVTAPETFNALLLNGLASLLHHREAAL.

An AB hydrolase-1 domain is found at Pro14–Arg116.

The protein belongs to the AB hydrolase superfamily. Hydrolase RutD family.

The enzyme catalyses carbamate + 2 H(+) = NH4(+) + CO2. Involved in pyrimidine catabolism. May facilitate the hydrolysis of carbamate, a reaction that can also occur spontaneously. The protein is Putative carbamate hydrolase RutD of Escherichia coli O81 (strain ED1a).